Here is a 312-residue protein sequence, read N- to C-terminus: Carbonic anhydrase 4 (312 aa).

Residues 1 to 18 (MRLLLALLVLAAAPPQAR) form the signal peptide. The 265-residue stretch at 21-285 (SHWCYQIQVK…LGQRQVFRSG (265 aa)) folds into the Alpha-carbonic anhydrase domain. 2 disulfide bridges follow: Cys-24–Cys-36 and Cys-46–Cys-229. N-linked (GlcNAc...) asparagine glycosylation occurs at Asn-33. His-88 (proton donor/acceptor) is an active-site residue. Zn(2+)-binding residues include His-115, His-117, and His-140. N-linked (GlcNAc...) asparagine glycosylation is found at Asn-152 and Asn-195. Residue 225 to 226 (TT) coordinates substrate. Residue Asn-265 is glycosylated (N-linked (GlcNAc...) asparagine). Ser-284 carries GPI-anchor amidated serine lipidation. A propeptide spans 285 to 312 (GAPGLLLAQPLPTLLAPVLACLTVGFLR) (removed in mature form).

It belongs to the alpha-carbonic anhydrase family. In terms of assembly, interacts with SLC4A4. Requires Zn(2+) as cofactor.

The protein resides in the cell membrane. It catalyses the reaction hydrogencarbonate + H(+) = CO2 + H2O. With respect to regulation, inhibited by acetazolamide. In terms of biological role, catalyzes the reversible hydration of carbon dioxide into bicarbonate and protons and thus is essential to maintaining intracellular and extracellular pH. May stimulate the sodium/bicarbonate transporter activity of SLC4A4 that acts in pH homeostasis. It is essential for acid overload removal from the retina and retina epithelium, and acid release in the choriocapillaris in the choroid. The chain is Carbonic anhydrase 4 (CA4) from Bos taurus (Bovine).